Here is a 314-residue protein sequence, read N- to C-terminus: Cathepsin L 1 (314 aa).

The N-terminal stretch at methionine 1–asparagine 24 is a signal peptide. Positions leucine 25–lysine 109 are cleaved as a propeptide — activation peptide. Intrachain disulfides connect cysteine 132-cysteine 175, cysteine 166-cysteine 207, and cysteine 259-cysteine 302. Residue cysteine 135 is part of the active site. Active-site residues include histidine 265 and asparagine 282.

The protein belongs to the peptidase C1 family.

It is found in the secreted. The catalysed reaction is Specificity close to that of papain. As compared to cathepsin B, cathepsin L exhibits higher activity toward protein substrates, but has little activity on Z-Arg-Arg-NHMec, and no peptidyl-dipeptidase activity.. Its function is as follows. May be involved in extracellular digestion. The protein is Cathepsin L 1 of Paramecium tetraurelia.